We begin with the raw amino-acid sequence, 386 residues long: MVILGSTGSIGTQAIDVVLRNPGRFKVVALSAAGGAVELLAEQAVALGVHTVAVADPAAEEAAARGPGGQGAGRPLPRVLAGPDAATELAAAECHSVLNGITGSIGLAPTLAALRAGRVLVLANKESLIVGGPLVKAVAQPGQIVPVDSEHAALFQALAGGARAEVRKLVVTASGGPFRNRTREQLAAVTPADALAHPTWAMGPVVTINSATLVNKGLEVIEAHLLYDVPFDRIEVVVHPQSVVHSMVEFVDGSTMAQASPPDMRMPIALGLGWPDRVPDAAPGCDWTKAATWEFFPLDNEAFPAVELAREVGTLGGTAPAVFNAANEECVDAFLKGALPFTGIVDTVAKVVAEHGTPQSGTSLTVEDVLHAESWARARARELAAG.

Residues Thr7, Gly8, Ser9, Ile10, Ala33, and Asn124 each coordinate NADPH. Lys125 lines the 1-deoxy-D-xylulose 5-phosphate pocket. Position 126 (Glu126) interacts with NADPH. A Mn(2+)-binding site is contributed by Asp148. 4 residues coordinate 1-deoxy-D-xylulose 5-phosphate: Ser149, Glu150, Ser174, and His197. Glu150 provides a ligand contact to Mn(2+). Gly203 lines the NADPH pocket. Residues Ser210, Asn215, Lys216, and Glu219 each coordinate 1-deoxy-D-xylulose 5-phosphate. Mn(2+) is bound at residue Glu219.

This sequence belongs to the DXR family. Requires Mg(2+) as cofactor. Mn(2+) serves as cofactor.

The enzyme catalyses 2-C-methyl-D-erythritol 4-phosphate + NADP(+) = 1-deoxy-D-xylulose 5-phosphate + NADPH + H(+). It functions in the pathway isoprenoid biosynthesis; isopentenyl diphosphate biosynthesis via DXP pathway; isopentenyl diphosphate from 1-deoxy-D-xylulose 5-phosphate: step 1/6. Functionally, catalyzes the NADPH-dependent rearrangement and reduction of 1-deoxy-D-xylulose-5-phosphate (DXP) to 2-C-methyl-D-erythritol 4-phosphate (MEP). The protein is 1-deoxy-D-xylulose 5-phosphate reductoisomerase of Kitasatospora griseola (Streptomyces griseolosporeus).